The sequence spans 462 residues: ATP synthase subunit beta (462 aa).

152–159 (GGAGVGKT) contributes to the ATP binding site.

Belongs to the ATPase alpha/beta chains family. As to quaternary structure, F-type ATPases have 2 components, CF(1) - the catalytic core - and CF(0) - the membrane proton channel. CF(1) has five subunits: alpha(3), beta(3), gamma(1), delta(1), epsilon(1). CF(0) has three main subunits: a(1), b(2) and c(9-12). The alpha and beta chains form an alternating ring which encloses part of the gamma chain. CF(1) is attached to CF(0) by a central stalk formed by the gamma and epsilon chains, while a peripheral stalk is formed by the delta and b chains.

It localises to the cell inner membrane. The enzyme catalyses ATP + H2O + 4 H(+)(in) = ADP + phosphate + 5 H(+)(out). Its function is as follows. Produces ATP from ADP in the presence of a proton gradient across the membrane. The catalytic sites are hosted primarily by the beta subunits. This is ATP synthase subunit beta from Tolumonas auensis (strain DSM 9187 / NBRC 110442 / TA 4).